The primary structure comprises 83 residues: Cytochrome c oxidase subunit 7A2, mitochondrial (83 aa).

The transit peptide at 1 to 23 (MLRNLLALRQIAKRTISTSSRRQ) directs the protein to the mitochondrion. At 24-48 (FENKVPEKQKLFQEDNGIPVHLKGG) the chain is on the mitochondrial matrix side. Lysine 33 carries the N6-acetyllysine modification. The helical transmembrane segment at 49–77 (IADALLYRATLILTVGGTAYAMYELAVAS) threads the bilayer. Residues 78–83 (FPKKQD) lie on the Mitochondrial intermembrane side of the membrane.

The protein belongs to the cytochrome c oxidase VIIa family. Component of the cytochrome c oxidase (complex IV, CIV), a multisubunit enzyme composed of 14 subunits. The complex is composed of a catalytic core of 3 subunits MT-CO1, MT-CO2 and MT-CO3, encoded in the mitochondrial DNA, and 11 supernumerary subunits COX4I1 (or COX4I2), COX5A, COX5B, COX6A2 (or COX6A1), COX6B1 (or COX6B2), COX6C, COX7A1 (or COX7A2), COX7B, COX7C, COX8B and NDUFA4, which are encoded in the nuclear genome. The complex exists as a monomer or a dimer and forms supercomplexes (SCs) in the inner mitochondrial membrane with NADH-ubiquinone oxidoreductase (complex I, CI) and ubiquinol-cytochrome c oxidoreductase (cytochrome b-c1 complex, complex III, CIII), resulting in different assemblies (supercomplex SCI(1)III(2)IV(1) and megacomplex MCI(2)III(2)IV(2)). Interacts with PET100.

Its subcellular location is the mitochondrion inner membrane. The protein operates within energy metabolism; oxidative phosphorylation. Component of the cytochrome c oxidase, the last enzyme in the mitochondrial electron transport chain which drives oxidative phosphorylation. The respiratory chain contains 3 multisubunit complexes succinate dehydrogenase (complex II, CII), ubiquinol-cytochrome c oxidoreductase (cytochrome b-c1 complex, complex III, CIII) and cytochrome c oxidase (complex IV, CIV), that cooperate to transfer electrons derived from NADH and succinate to molecular oxygen, creating an electrochemical gradient over the inner membrane that drives transmembrane transport and the ATP synthase. Cytochrome c oxidase is the component of the respiratory chain that catalyzes the reduction of oxygen to water. Electrons originating from reduced cytochrome c in the intermembrane space (IMS) are transferred via the dinuclear copper A center (CU(A)) of subunit 2 and heme A of subunit 1 to the active site in subunit 1, a binuclear center (BNC) formed by heme A3 and copper B (CU(B)). The BNC reduces molecular oxygen to 2 water molecules using 4 electrons from cytochrome c in the IMS and 4 protons from the mitochondrial matrix. This is Cytochrome c oxidase subunit 7A2, mitochondrial (COX7A2) from Bos taurus (Bovine).